The sequence spans 234 residues: Octanoyltransferase (234 aa).

The region spanning 42–226 is the BPL/LPL catalytic domain; it reads PDTPDEFWVV…ELASLIGYET (185 aa). Substrate contacts are provided by residues 81–88, 157–159, and 170–172; these read RGGQVTYH, SLG, and GLA. C188 (acyl-thioester intermediate) is an active-site residue.

This sequence belongs to the LipB family.

It is found in the cytoplasm. It carries out the reaction octanoyl-[ACP] + L-lysyl-[protein] = N(6)-octanoyl-L-lysyl-[protein] + holo-[ACP] + H(+). Its pathway is protein modification; protein lipoylation via endogenous pathway; protein N(6)-(lipoyl)lysine from octanoyl-[acyl-carrier-protein]: step 1/2. Its function is as follows. Catalyzes the transfer of endogenously produced octanoic acid from octanoyl-acyl-carrier-protein onto the lipoyl domains of lipoate-dependent enzymes. Lipoyl-ACP can also act as a substrate although octanoyl-ACP is likely to be the physiological substrate. This Aeromonas hydrophila subsp. hydrophila (strain ATCC 7966 / DSM 30187 / BCRC 13018 / CCUG 14551 / JCM 1027 / KCTC 2358 / NCIMB 9240 / NCTC 8049) protein is Octanoyltransferase.